Reading from the N-terminus, the 367-residue chain is Mitogen-activated protein kinase 12 (367 aa).

The region spanning 27-311 is the Protein kinase domain; that stretch reads YRDLQPVGSG…AGEALAHPYF (285 aa). ATP-binding positions include 33 to 41 and Lys-56; that span reads VGSGAYGAV. Asp-153 (proton acceptor) is an active-site residue. The residue at position 183 (Thr-183) is a Phosphothreonine; by MAP2K3 and MAP2K6. A TXY motif is present at residues 183–185; that stretch reads TGY. Position 185 is a phosphotyrosine (Tyr-185).

This sequence belongs to the protein kinase superfamily. CMGC Ser/Thr protein kinase family. MAP kinase subfamily. Monomer. Interacts with the PDZ domain of the syntrophin SNTA1. Interacts with SH3BP5. Interacts with LIN7C, SCRIB and SYNJ2BP. Interacts with PTPN4; this interaction induces the activation of PTPN4 phosphatase activity. Mg(2+) serves as cofactor. Post-translationally, dually phosphorylated on Thr-183 and Tyr-185 by MAP2K3/MKK3 and MAP2K6/MKK6, which activates the enzyme. Ubiquitinated. Ubiquitination leads to degradation by the proteasome pathway. Highly expressed in skeletal muscle and heart.

The protein localises to the cytoplasm. The protein resides in the nucleus. It is found in the mitochondrion. It carries out the reaction L-seryl-[protein] + ATP = O-phospho-L-seryl-[protein] + ADP + H(+). The catalysed reaction is L-threonyl-[protein] + ATP = O-phospho-L-threonyl-[protein] + ADP + H(+). Its activity is regulated as follows. Activated by phosphorylation on threonine and tyrosine. MAP2K3/MKK3 and MAP2K6/MKK6 are both essential for the activation of MAPK12 induced by environmental stress, whereas MAP2K6/MKK6 is the major MAPK12 activator in response to TNF-alpha. Functionally, serine/threonine kinase which acts as an essential component of the MAP kinase signal transduction pathway. MAPK12 is one of the four p38 MAPKs which play an important role in the cascades of cellular responses evoked by extracellular stimuli such as pro-inflammatory cytokines or physical stress leading to direct activation of transcription factors such as ELK1 and ATF2. Accordingly, p38 MAPKs phosphorylate a broad range of proteins and it has been estimated that they may have approximately 200 to 300 substrates each. Some of the targets are downstream kinases such as MAPKAPK2, which are activated through phosphorylation and further phosphorylate additional targets. Plays a role in myoblast differentiation and also in the down-regulation of cyclin D1 in response to hypoxia in adrenal cells suggesting MAPK12 may inhibit cell proliferation while promoting differentiation. Phosphorylates DLG1. Following osmotic shock, MAPK12 in the cell nucleus increases its association with nuclear DLG1, thereby causing dissociation of DLG1-SFPQ complexes. This function is independent of its catalytic activity and could affect mRNA processing and/or gene transcription to aid cell adaptation to osmolarity changes in the environment. Regulates UV-induced checkpoint signaling and repair of UV-induced DNA damage and G2 arrest after gamma-radiation exposure. MAPK12 is involved in the regulation of SLC2A1 expression and basal glucose uptake in L6 myotubes; and negatively regulates SLC2A4 expression and contraction-mediated glucose uptake in adult skeletal muscle. C-Jun (JUN) phosphorylation is stimulated by MAPK14 and inhibited by MAPK12, leading to a distinct AP-1 regulation. MAPK12 is required for the normal kinetochore localization of PLK1, prevents chromosomal instability and supports mitotic cell viability. MAPK12-signaling is also positively regulating the expansion of transient amplifying myogenic precursor cells during muscle growth and regeneration. This chain is Mitogen-activated protein kinase 12 (MAPK12), found in Homo sapiens (Human).